A 161-amino-acid chain; its full sequence is Probable calcium-binding protein CML16 (161 aa).

EF-hand domains are found at residues 8-43 (DQIK…LGIK), 44-79 (PRGD…DINE), 83-118 (INQE…MGHP), and 119-154 (LTYR…SAAD). 19 residues coordinate Ca(2+): D21, D23, D25, S27, E32, D57, N59, N61, S63, E68, D96, D98, N100, S102, E107, D132, N134, D136, and E143.

Its function is as follows. Potential calcium sensor. The protein is Probable calcium-binding protein CML16 (CML16) of Arabidopsis thaliana (Mouse-ear cress).